The following is a 32-amino-acid chain: Islet amyloid polypeptide (32 aa).

Belongs to the calcitonin family. As to quaternary structure, can form homodimers. Interacts with IDE and INS. Interaction with INS inhibits homodimerization and fibril formation.

The protein resides in the secreted. Amylin/IAPP is a glucoregulatory peptide hormone that plays an important role in the regulation of energy homeostasis. Selectively inhibits insulin-stimulated glucose utilization and glycogen deposition in muscle, while not affecting adipocyte glucose metabolism. IAPP function is mediated by the CALCR-RAMPs (AMYRs) receptor complexes. Amylin can also bind CALCR receptor in the absence of RAMPs, although it is more selective for AMYRs. This is Islet amyloid polypeptide (IAPP) from Ovis aries (Sheep).